Here is a 461-residue protein sequence, read N- to C-terminus: Bifunctional protein GlmU (461 aa).

The segment at 1 to 230 is pyrophosphorylase; sequence MECLMAVILA…SSEILGINDR (230 aa). UDP-N-acetyl-alpha-D-glucosamine is bound by residues 9-12, Lys23, Gln73, 78-79, 101-103, Gly140, Glu155, Asn170, and Asn228; these read LAAG, GT, and YGD. Asp103 contacts Mg(2+). Position 228 (Asn228) interacts with Mg(2+). Residues 231 to 251 are linker; sequence VQLAEAGRIIRSRILKRHMKN. The tract at residues 252-461 is N-acetyltransferase; it reads GVTIIDPDST…KKGMLRQEKE (210 aa). UDP-N-acetyl-alpha-D-glucosamine is bound by residues Arg333 and Lys351. His363 functions as the Proton acceptor in the catalytic mechanism. Tyr366 and Asn377 together coordinate UDP-N-acetyl-alpha-D-glucosamine. Acetyl-CoA is bound by residues 386 to 387, Ala423, and Arg440; that span reads NY.

The protein in the N-terminal section; belongs to the N-acetylglucosamine-1-phosphate uridyltransferase family. This sequence in the C-terminal section; belongs to the transferase hexapeptide repeat family. Homotrimer. Mg(2+) serves as cofactor.

Its subcellular location is the cytoplasm. The catalysed reaction is alpha-D-glucosamine 1-phosphate + acetyl-CoA = N-acetyl-alpha-D-glucosamine 1-phosphate + CoA + H(+). It catalyses the reaction N-acetyl-alpha-D-glucosamine 1-phosphate + UTP + H(+) = UDP-N-acetyl-alpha-D-glucosamine + diphosphate. It participates in nucleotide-sugar biosynthesis; UDP-N-acetyl-alpha-D-glucosamine biosynthesis; N-acetyl-alpha-D-glucosamine 1-phosphate from alpha-D-glucosamine 6-phosphate (route II): step 2/2. It functions in the pathway nucleotide-sugar biosynthesis; UDP-N-acetyl-alpha-D-glucosamine biosynthesis; UDP-N-acetyl-alpha-D-glucosamine from N-acetyl-alpha-D-glucosamine 1-phosphate: step 1/1. The protein operates within bacterial outer membrane biogenesis; LPS lipid A biosynthesis. In terms of biological role, catalyzes the last two sequential reactions in the de novo biosynthetic pathway for UDP-N-acetylglucosamine (UDP-GlcNAc). The C-terminal domain catalyzes the transfer of acetyl group from acetyl coenzyme A to glucosamine-1-phosphate (GlcN-1-P) to produce N-acetylglucosamine-1-phosphate (GlcNAc-1-P), which is converted into UDP-GlcNAc by the transfer of uridine 5-monophosphate (from uridine 5-triphosphate), a reaction catalyzed by the N-terminal domain. The polypeptide is Bifunctional protein GlmU (Acetivibrio thermocellus (strain ATCC 27405 / DSM 1237 / JCM 9322 / NBRC 103400 / NCIMB 10682 / NRRL B-4536 / VPI 7372) (Clostridium thermocellum)).